Here is a 390-residue protein sequence, read N- to C-terminus: Glutamate 5-kinase (390 aa).

Lys29 provides a ligand contact to ATP. Substrate contacts are provided by Ser69, Asp156, and Asn168. An ATP-binding site is contributed by 188–189; the sequence is TD. In terms of domain architecture, PUA spans 295 to 374; sequence SGSLIVDAGA…EQFDRILGNN (80 aa).

It belongs to the glutamate 5-kinase family.

It is found in the cytoplasm. The enzyme catalyses L-glutamate + ATP = L-glutamyl 5-phosphate + ADP. The protein operates within amino-acid biosynthesis; L-proline biosynthesis; L-glutamate 5-semialdehyde from L-glutamate: step 1/2. Its function is as follows. Catalyzes the transfer of a phosphate group to glutamate to form L-glutamate 5-phosphate. This is Glutamate 5-kinase from Psychrobacter arcticus (strain DSM 17307 / VKM B-2377 / 273-4).